Consider the following 341-residue polypeptide: 4-amino-5-hydroxymethyl-2-methylpyrimidine phosphate synthase (341 aa).

Lysine 62 is modified (N6-(pyridoxal phosphate)lysine). Histidine 66 is an active-site residue. Residue 115-118 (GEFG) coordinates pyridoxal 5'-phosphate. The CCCFC; essential for catalytic activity, may be the site of iron coordination signature appears at 195-199 (CCCFC).

The protein belongs to the NMT1/THI5 family. As to quaternary structure, homodimer. Fe cation serves as cofactor.

It carries out the reaction N(6)-(pyridoxal phosphate)-L-lysyl-[4-amino-5-hydroxymethyl-2-methylpyrimidine phosphate synthase] + L-histidyl-[4-amino-5-hydroxymethyl-2-methylpyrimidine phosphate synthase] + 2 Fe(3+) + 4 H2O = L-lysyl-[4-amino-5-hydroxymethyl-2-methylpyrimidine phosphate synthase] + (2S)-2-amino-5-hydroxy-4-oxopentanoyl-[4-amino-5-hydroxymethyl-2-methylpyrimidine phosphate synthase] + 4-amino-2-methyl-5-(phosphooxymethyl)pyrimidine + 3-oxopropanoate + 2 Fe(2+) + 2 H(+). Its pathway is cofactor biosynthesis; thiamine diphosphate biosynthesis. Functionally, responsible for the formation of the pyrimidine heterocycle in the thiamine biosynthesis pathway. Catalyzes the formation of hydroxymethylpyrimidine phosphate (HMP-P) from histidine and pyridoxal phosphate (PLP). The protein uses PLP and the active site histidine to form HMP-P, generating an inactive enzyme. The enzyme can only undergo a single turnover, which suggests it is a suicide enzyme. This is 4-amino-5-hydroxymethyl-2-methylpyrimidine phosphate synthase from Uromyces fabae (Rust fungus).